The sequence spans 83 residues: Cytochrome b559 subunit alpha (83 aa).

The helical transmembrane segment at 21 to 35 (VIHSITIPSLFIAGW) threads the bilayer. His23 is a binding site for heme.

It belongs to the PsbE/PsbF family. In terms of assembly, heterodimer of an alpha subunit and a beta subunit. PSII is composed of 1 copy each of membrane proteins PsbA, PsbB, PsbC, PsbD, PsbE, PsbF, PsbH, PsbI, PsbJ, PsbK, PsbL, PsbM, PsbT, PsbX, PsbY, PsbZ, Psb30/Ycf12, at least 3 peripheral proteins of the oxygen-evolving complex and a large number of cofactors. It forms dimeric complexes. Heme b is required as a cofactor.

It is found in the plastid. Its subcellular location is the chloroplast thylakoid membrane. This b-type cytochrome is tightly associated with the reaction center of photosystem II (PSII). PSII is a light-driven water:plastoquinone oxidoreductase that uses light energy to abstract electrons from H(2)O, generating O(2) and a proton gradient subsequently used for ATP formation. It consists of a core antenna complex that captures photons, and an electron transfer chain that converts photonic excitation into a charge separation. The sequence is that of Cytochrome b559 subunit alpha from Zygnema circumcarinatum (Green alga).